Here is a 241-residue protein sequence, read N- to C-terminus: Carboxysome assembly protein CcmN (241 aa).

Residues 123–206 (GASSPTTDSV…PTAPTVVTTA (84 aa)) form a disordered region. Positions 185 to 195 (QISSNRSPGES) are enriched in polar residues. Positions 196-206 (TPTAPTVVTTA) are enriched in low complexity. An Encapsulation peptide motif is present at residues 219–241 (VVGQVYINQLLLTLFPERRYFSS).

This sequence belongs to the CcmN family. In terms of assembly, interacts with full-length and the N-terminal 249 residues of CcmM; a probable CcmM-CcaA-CcmN complex can also be isolated. Interacts with CcmK.

It localises to the carboxysome. In terms of biological role, required for carboxysome formation; the N-terminus interacts with CcmM which itself binds RuBisCO (ribulose bisphosphate carboxylase, rbcL-rbcS). May also contact shell protein CcmK to help assemble the carboxysome. Its function is as follows. Beta-carboxysome assembly initiates when soluble RuBisCO is condensed into a liquid matrix in a pre-carboxysome by the RbcS-like domains of probably both forms of CcmM. CcmN interacts with the N-terminus of full-length CcmM, and then recruits the CcmK major shell protein via CcmN's encapsulation peptide. Shell formation requires CcmK proteins and CcmO. CcmL caps the otherwise elongated carboxysome. Once fully encapsulated carboxysomes are formed, they migrate within the cell probably via interactions with the cytoskeleton. The protein is Carboxysome assembly protein CcmN of Synechocystis sp. (strain ATCC 27184 / PCC 6803 / Kazusa).